Here is a 148-residue protein sequence, read N- to C-terminus: SPbeta prophage-derived disulfide bond formation protein B (148 aa).

The chain crosses the membrane as a helical span at residues 7–26 (KSFFLLLFFLSFFGTMASLF). Cysteine 36 and cysteine 39 are oxidised to a cystine. The next 2 helical transmembrane spans lie at 41-60 (YQRI…LLKK) and 67-84 (YVVF…YHYI). Residues cysteine 95 and cysteine 102 are joined by a disulfide bond. A helical membrane pass occupies residues 111–135 (GFITLPLMSSVCFALIFGIGLKLII).

It belongs to the DsbB family. BdbC subfamily.

The protein resides in the cell membrane. Its function is as follows. Important but not absolutely essential for the production of the lantibiotic sublancin 168, it may also be required for the stability of other secreted proteins. Not required for competence for DNA uptake. This Bacillus subtilis (strain 168) protein is SPbeta prophage-derived disulfide bond formation protein B (bdbB).